Here is a 586-residue protein sequence, read N- to C-terminus: Asparagine synthetase [glutamine-hydrolyzing] (586 aa).

The active-site For GATase activity is the C2. A Glutamine amidotransferase type-2 domain is found at 2–185 (CGILAVLGCS…PGHLYSSKSG (184 aa)). Residues 50–54 (RLAII), 75–77 (NGE), and D98 each bind L-glutamine. One can recognise an Asparagine synthetase domain in the interval 194 to 517 (PPWFNESVPS…PQNSARLTVP (324 aa)). Residues L232, V268, and 342-343 (SG) contribute to the ATP site.

This sequence belongs to the asparagine synthetase family.

The catalysed reaction is L-aspartate + L-glutamine + ATP + H2O = L-asparagine + L-glutamate + AMP + diphosphate + H(+). The protein operates within amino-acid biosynthesis; L-asparagine biosynthesis; L-asparagine from L-aspartate (L-Gln route): step 1/1. This chain is Asparagine synthetase [glutamine-hydrolyzing], found in Brassica oleracea (Wild cabbage).